The following is a 355-amino-acid chain: NADH dehydrogenase [ubiquinone] 1 alpha subcomplex subunit 10, mitochondrial (355 aa).

A mitochondrion-targeting transit peptide spans 1–35; it reads MALRLLRLVPASAPARGLAAGAQRVGRIHTSVHCK. At lysine 122 the chain carries N6-acetyllysine; alternate. Residue lysine 122 is modified to N6-succinyllysine; alternate. Residue serine 250 is modified to Phosphoserine; by PINK1. Lysine 285 carries the post-translational modification N6-succinyllysine.

It belongs to the complex I NDUFA10 subunit family. Complex I is composed of 45 different subunits. This a component of the hydrophobic protein fraction. The cofactor is FAD. Phosphorylation at Ser-250 by PINK1 is required for the binding and/or reduction of the complex I substrate ubiquinone. In terms of processing, acetylation of Lys-242 is observed in liver mitochondria from fasted mice but not from fed mice.

Its subcellular location is the mitochondrion matrix. Accessory subunit of the mitochondrial membrane respiratory chain NADH dehydrogenase (Complex I), that is believed not to be involved in catalysis. Complex I functions in the transfer of electrons from NADH to the respiratory chain. The immediate electron acceptor for the enzyme is believed to be ubiquinone. In Mus musculus (Mouse), this protein is NADH dehydrogenase [ubiquinone] 1 alpha subcomplex subunit 10, mitochondrial (Ndufa10).